We begin with the raw amino-acid sequence, 346 residues long: Proto-oncogene serine/threonine-protein kinase mos (346 aa).

Residues 60-341 (VCLLQRLGAG…RPLLVDLTSL (282 aa)) form the Protein kinase domain. ATP is bound by residues 66 to 74 (LGAGGFGSV) and Lys87. Residue Asp201 is the Proton acceptor of the active site.

It belongs to the protein kinase superfamily. Ser/Thr protein kinase family.

It catalyses the reaction L-seryl-[protein] + ATP = O-phospho-L-seryl-[protein] + ADP + H(+). The catalysed reaction is L-threonyl-[protein] + ATP = O-phospho-L-threonyl-[protein] + ADP + H(+). In Chlorocebus aethiops (Green monkey), this protein is Proto-oncogene serine/threonine-protein kinase mos.